A 640-amino-acid polypeptide reads, in one-letter code: uncharacterized protein (640 aa).

The region spanning 184–328 (VKRDTIFIIK…KVQRSIDTMI (145 aa)) is the TIR domain. A disordered region spans residues 613 to 640 (LPNDLDDEDEELDDSTLGRPDSDEEGGE). Over residues 616-626 (DLDDEDEELDD) the composition is skewed to acidic residues.

This is an uncharacterized protein from Sinorhizobium fredii (strain NBRC 101917 / NGR234).